A 103-amino-acid chain; its full sequence is Large ribosomal subunit protein uL24 (103 aa).

The protein belongs to the universal ribosomal protein uL24 family. As to quaternary structure, part of the 50S ribosomal subunit.

Functionally, one of two assembly initiator proteins, it binds directly to the 5'-end of the 23S rRNA, where it nucleates assembly of the 50S subunit. Its function is as follows. One of the proteins that surrounds the polypeptide exit tunnel on the outside of the subunit. The sequence is that of Large ribosomal subunit protein uL24 from Actinobacillus pleuropneumoniae serotype 5b (strain L20).